The chain runs to 284 residues: MTATIIDGKETAKEKRGQLAKEVEELKKQGVTPGLAVILIGDDPASLSYVRGKKKAAEAMGIRFQLDHFDASFTEQELLEVIDQYNQNDDFHGILVQLPLPDHISEQAVIERISPEKDVDGFHPLNVGKMLLGEDTFLPCTPAGIVELLKKTEIDLSGKEVVVVGRSNIVGKPVGQLLLNENATVTYCHSRTADITAHTKKADILIVAVGKANFIKADQIKEGAVVIDVGVNRLDNGKLAGDVDFEEAKEKASYITPVPGGVGPMTITMLAHNTVKSAKRTIQL.

Residues 165–167, S190, and V231 contribute to the NADP(+) site; that span reads GRS.

It belongs to the tetrahydrofolate dehydrogenase/cyclohydrolase family. In terms of assembly, homodimer.

It catalyses the reaction (6R)-5,10-methylene-5,6,7,8-tetrahydrofolate + NADP(+) = (6R)-5,10-methenyltetrahydrofolate + NADPH. The enzyme catalyses (6R)-5,10-methenyltetrahydrofolate + H2O = (6R)-10-formyltetrahydrofolate + H(+). It participates in one-carbon metabolism; tetrahydrofolate interconversion. In terms of biological role, catalyzes the oxidation of 5,10-methylenetetrahydrofolate to 5,10-methenyltetrahydrofolate and then the hydrolysis of 5,10-methenyltetrahydrofolate to 10-formyltetrahydrofolate. The polypeptide is Bifunctional protein FolD (Bacillus licheniformis (strain ATCC 14580 / DSM 13 / JCM 2505 / CCUG 7422 / NBRC 12200 / NCIMB 9375 / NCTC 10341 / NRRL NRS-1264 / Gibson 46)).